The sequence spans 174 residues: Protein FanG (174 aa).

Residues 1 to 21 form the signal peptide; sequence MKKLYKAITVICILMSNLQSA. Cys41 and Cys75 are joined by a disulfide.

The protein localises to the fimbrium. In terms of biological role, involved in the biosynthesis of K99 fimbriae. The chain is Protein FanG (fanG) from Escherichia coli.